Here is a 359-residue protein sequence, read N- to C-terminus: Ferredoxin--NADP reductase (359 aa).

FAD is bound by residues D48, Q56, Y61, A101, F139, D304, and S345. A disordered region spans residues 340-359 (VHTHTSNDTNLQSRLHAAAE). The segment covering 341 to 352 (HTHTSNDTNLQS) has biased composition (polar residues).

It belongs to the ferredoxin--NADP reductase type 2 family. As to quaternary structure, homodimer. FAD serves as cofactor.

It carries out the reaction 2 reduced [2Fe-2S]-[ferredoxin] + NADP(+) + H(+) = 2 oxidized [2Fe-2S]-[ferredoxin] + NADPH. This is Ferredoxin--NADP reductase from Ralstonia nicotianae (strain ATCC BAA-1114 / GMI1000) (Ralstonia solanacearum).